A 407-amino-acid polypeptide reads, in one-letter code: Probable tRNA sulfurtransferase (407 aa).

One can recognise a THUMP domain in the interval 61-165 (NEITYRLSKI…LDAIYMYEEV (105 aa)). Residues 183–184 (ML), 208–209 (HF), arginine 265, glycine 287, and glutamine 296 each bind ATP.

It belongs to the ThiI family.

It is found in the cytoplasm. It catalyses the reaction [ThiI sulfur-carrier protein]-S-sulfanyl-L-cysteine + a uridine in tRNA + 2 reduced [2Fe-2S]-[ferredoxin] + ATP + H(+) = [ThiI sulfur-carrier protein]-L-cysteine + a 4-thiouridine in tRNA + 2 oxidized [2Fe-2S]-[ferredoxin] + AMP + diphosphate. The catalysed reaction is [ThiS sulfur-carrier protein]-C-terminal Gly-Gly-AMP + S-sulfanyl-L-cysteinyl-[cysteine desulfurase] + AH2 = [ThiS sulfur-carrier protein]-C-terminal-Gly-aminoethanethioate + L-cysteinyl-[cysteine desulfurase] + A + AMP + 2 H(+). The protein operates within cofactor biosynthesis; thiamine diphosphate biosynthesis. Catalyzes the ATP-dependent transfer of a sulfur to tRNA to produce 4-thiouridine in position 8 of tRNAs, which functions as a near-UV photosensor. Also catalyzes the transfer of sulfur to the sulfur carrier protein ThiS, forming ThiS-thiocarboxylate. This is a step in the synthesis of thiazole, in the thiamine biosynthesis pathway. The sulfur is donated as persulfide by IscS. The chain is Probable tRNA sulfurtransferase from Staphylococcus aureus (strain Mu3 / ATCC 700698).